The chain runs to 245 residues: 2,3-bisphosphoglycerate-dependent phosphoglycerate mutase (245 aa).

Substrate-binding positions include 9–16, 22–23, R61, 88–91, K99, 115–116, and 181–182; these read RHGESEWN, TG, ERHY, RR, and GN. Catalysis depends on H10, which acts as the Tele-phosphohistidine intermediate. The Proton donor/acceptor role is filled by E88.

This sequence belongs to the phosphoglycerate mutase family. BPG-dependent PGAM subfamily.

It catalyses the reaction (2R)-2-phosphoglycerate = (2R)-3-phosphoglycerate. The protein operates within carbohydrate degradation; glycolysis; pyruvate from D-glyceraldehyde 3-phosphate: step 3/5. Its function is as follows. Catalyzes the interconversion of 2-phosphoglycerate and 3-phosphoglycerate. This chain is 2,3-bisphosphoglycerate-dependent phosphoglycerate mutase, found in Nocardia farcinica (strain IFM 10152).